We begin with the raw amino-acid sequence, 165 residues long: MRQHRQFMDRTHYLLTFSSSETLLRLLLRIVDRAPKGRTFGDVLQPAKPEYRVGEVAEVIFVGANPKNSVQNQTHQTFLTVEKYEATSTSWQIVCNDASWETRFYWHKGLLGLSNATVEWHIPDTAQPGIYRIRYFGHNRKQDILKPAVILSFEGTSPAFEVVTI.

The protein belongs to the neutral ceramidase family. In terms of tissue distribution, ubiquitous. Expression is reduced with increasing age and in late-onset Alzheimer disease (LOAD) patients. This reduction is even more pronounced in patients with an affected mother.

The chain is Putative inactive neutral ceramidase B from Homo sapiens (Human).